The following is a 101-amino-acid chain: Aspartyl/glutamyl-tRNA(Asn/Gln) amidotransferase subunit C (101 aa).

The protein belongs to the GatC family. As to quaternary structure, heterotrimer of A, B and C subunits.

It carries out the reaction L-glutamyl-tRNA(Gln) + L-glutamine + ATP + H2O = L-glutaminyl-tRNA(Gln) + L-glutamate + ADP + phosphate + H(+). The enzyme catalyses L-aspartyl-tRNA(Asn) + L-glutamine + ATP + H2O = L-asparaginyl-tRNA(Asn) + L-glutamate + ADP + phosphate + 2 H(+). Its function is as follows. Allows the formation of correctly charged Asn-tRNA(Asn) or Gln-tRNA(Gln) through the transamidation of misacylated Asp-tRNA(Asn) or Glu-tRNA(Gln) in organisms which lack either or both of asparaginyl-tRNA or glutaminyl-tRNA synthetases. The reaction takes place in the presence of glutamine and ATP through an activated phospho-Asp-tRNA(Asn) or phospho-Glu-tRNA(Gln). This Lactococcus lactis subsp. cremoris (strain MG1363) protein is Aspartyl/glutamyl-tRNA(Asn/Gln) amidotransferase subunit C.